The primary structure comprises 825 residues: Hypoxia-inducible factor 1-alpha (825 aa).

Residues 1–30 are disordered; sequence MEGAGGENEKKKMSSERRKEKSRDAARSRR. The tract at residues 1–401 is interaction with TSGA10; it reads MEGAGGENEK…KEPDALTLLA (401 aa). The span at 7 to 30 shows a compositional bias: basic and acidic residues; that stretch reads ENEKKKMSSERRKEKSRDAARSRR. The 54-residue stretch at 17–70 folds into the bHLH domain; the sequence is RRKEKSRDAARSRRSKESEVFYELAHQLPLPHNVSSHLDKASVMRLTISYLRVR. The DNA-binding stretch occupies residues 21–30; it reads KSRDAARSRR. The PAS 1 domain maps to 85–158; that stretch reads KAQMNCFYLK…THRNGPVRKG (74 aa). The segment at 170–191 is required for heterodimer formation with ARNT; the sequence is RMKCTLTSRGRTMNIKSATWKV. One can recognise a PAS 2 domain in the interval 228–298; it reads PHPSNIEIPL…KTHHDMFTKG (71 aa). S247 carries the post-translational modification Phosphoserine; by CK1. In terms of domain architecture, PAC spans 302-345; it reads TGQYRMLAKRGGYVWVETQATVIYNTKDSQPQCIVCVNYVVSGI. Residues 401 to 602 form an ODD region; it reads APAAGDTIIS…STVTGFQQTQ (202 aa). The residue at position 402 (P402) is a 4-hydroxyproline. Residues 492 to 516 show a composition bias toward polar residues; that stretch reads QIQDQPASPSDGSTRQSSPEPNSPS. Positions 492–520 are disordered; the sequence is QIQDQPASPSDGSTRQSSPEPNSPSEYCF. The segment at 530–574 is NTAD; the sequence is FKLELVEKLFAEDTEAKNPFSAQDTDLDLEMLAPYIPMDDDFQLR. N6-acetyllysine; alternate is present on K531. A Glycyl lysine isopeptide (Lys-Gly) (interchain with G-Cter in ubiquitin); alternate cross-link involves residue K531. Glycyl lysine isopeptide (Lys-Gly) (interchain with G-Cter in ubiquitin) cross-links involve residues K537 and K546. At S550 the chain carries Phosphoserine; by GSK3-beta. T554 carries the phosphothreonine; by GSK3-beta modification. The residue at position 563 (P563) is a 4-hydroxyproline. S575 is subject to Phosphoserine; by PLK3. The segment at 575-784 is ID; it reads SFDQLSPLES…SDLACRLLGQ (210 aa). Disordered regions lie at residues 579-602 and 654-674; these read LSPLESNSPSPPSVSTVTGFQQTQ and AKASAYSGTHSRTASPDRAGK. A Phosphoserine; by GSK3-beta modification is found at S588. Polar residues predominate over residues 654 to 667; sequence AKASAYSGTHSRTA. S657 is subject to Phosphoserine; by PLK3. The Nuclear localization signal motif lies at 717–721; it reads RKRKM. The tract at residues 785–825 is CTAD; that stretch reads SMDESGLPQLTSYDCEVNAPIQGSRNLLQGEELLRALDQVN. C799 is modified (S-nitrosocysteine). A (3S)-3-hydroxyasparagine modification is found at N802.

As to quaternary structure, interacts with the ARNT; forms a heterodimer that binds core DNA sequence 5'-TACGTG-3' within the hypoxia response element (HRE) of target gene promoters. Interacts with COPS5; the interaction increases the transcriptional activity of HIF1A through increased stability. Interacts with EP300 (via TAZ-type 1 domains); the interaction is stimulated in response to hypoxia and inhibited by CITED2. Interacts with CREBBP (via TAZ-type 1 domains). Interacts with NCOA1, NCOA2, APEX1 and HSP90. Interacts (hydroxylated within the ODD domain) with VHLL (via beta domain); the interaction, leads to polyubiquitination and subsequent HIF1A proteasomal degradation. During hypoxia, sumoylated HIF1A also binds VHL; the interaction promotes the ubiquitination of HIF1A. Interacts with SENP1; the interaction desumoylates HIF1A resulting in stabilization and activation of transcription. Interacts (via the ODD domain) with NAA10; the interaction appears not to acetylate HIF1A nor have any affect on protein stability, during hypoxia. Interacts with RWDD3; the interaction enhances HIF1A sumoylation. Interacts with TSGA10. Interacts with HIF3A. Interacts with RORA (via the DNA binding domain); the interaction enhances HIF1A transcription under hypoxia through increasing protein stability. Interaction with PSMA7 inhibits the transactivation activity of HIF1A under both normoxic and hypoxia-mimicking conditions. Interacts with USP20. Interacts with RACK1; promotes HIF1A ubiquitination and proteasome-mediated degradation. Interacts (via N-terminus) with USP19. Interacts with SIRT2. Interacts (deacetylated form) with EGLN1. Interacts with CBFA2T3. Interacts with HSP90AA1 and HSP90AB1. Interacts with DCUN1D1; this interaction increases the interaction between VHL and DCUN1D1. Interacts with HIF1AN. S-nitrosylation of Cys-799 may be responsible for increased recruitment of p300 coactivator necessary for transcriptional activity of HIF-1 complex. Post-translationally, acetylation of Lys-531 by ARD1 increases interaction with VHL and stimulates subsequent proteasomal degradation. Deacetylated by SIRT2 increases its interaction with and hydroxylation by EGLN1 thereby inactivating HIF1A activity by inducing its proteasomal degradation. In terms of processing, ubiquitinated; in normoxia, following hydroxylation and interaction with VHL. Lys-531 appears to be the principal site of ubiquitination. Clioquinol, the Cu/Zn-chelator, inhibits ubiquitination through preventing hydroxylation at Asn-802. Ubiquitinated by E3 ligase VHL. Deubiquitinated by UCHL1. Requires phosphorylation for DNA-binding. Phosphorylation at Ser-247 by CSNK1D/CK1 represses kinase activity and impairs ARNT binding. Phosphorylation by GSK3-beta and PLK3 promote degradation by the proteasome. Post-translationally, the iron and 2-oxoglutarate dependent 3-hydroxylation of asparagine is (S) stereospecific within HIF CTAD domains. In terms of processing, sumoylated; with SUMO1 under hypoxia. Sumoylation is enhanced through interaction with RWDD3. Both sumoylation and desumoylation seem to be involved in the regulation of its stability during hypoxia. Sumoylation can promote either its stabilization or its VHL-dependent degradation by promoting hydroxyproline-independent HIF1A-VHL complex binding, thus leading to HIF1A ubiquitination and proteasomal degradation. Desumoylation by SENP1 increases its stability amd transcriptional activity. There is a disaccord between various publications on the effect of sumoylation and desumoylation on its stability and transcriptional activity. In normoxia, is hydroxylated on Pro-402 and Pro-563 in the oxygen-dependent degradation domain (ODD) by EGLN1/PHD2 and EGLN2/PHD1. EGLN3/PHD3 has also been shown to hydroxylate Pro-563. The hydroxylated prolines promote interaction with VHL, initiating rapid ubiquitination and subsequent proteasomal degradation. Deubiquitinated by USP20. Under hypoxia, proline hydroxylation is impaired and ubiquitination is attenuated, resulting in stabilization. In normoxia, is hydroxylated on Asn-802 by HIF1AN, thus abrogating interaction with CREBBP and EP300 and preventing transcriptional activation. Repressed by iron ion, via Fe(2+) prolyl hydroxylase (PHD) enzymes-mediated hydroxylation and subsequent proteasomal degradation. As to expression, expressed in the kidney, higher expression is seen in the renal medulla than in the cortex. Expressed also in the perivenous zone of the liver.

The protein localises to the cytoplasm. Its subcellular location is the nucleus. The protein resides in the nucleus speckle. Its activity is regulated as follows. Induced by reactive oxygen species (ROS). Its function is as follows. Functions as a master transcriptional regulator of the adaptive response to hypoxia. Under hypoxic conditions, activates the transcription of over 40 genes, including erythropoietin, glucose transporters, glycolytic enzymes, vascular endothelial growth factor, HILPDA, and other genes whose protein products increase oxygen delivery or facilitate metabolic adaptation to hypoxia. Plays an essential role in embryonic vascularization, tumor angiogenesis and pathophysiology of ischemic disease. Heterodimerizes with ARNT; heterodimer binds to core DNA sequence 5'-TACGTG-3' within the hypoxia response element (HRE) of target gene promoters. Activation requires recruitment of transcriptional coactivators such as CREBBP and EP300. Activity is enhanced by interaction with NCOA1 and/or NCOA2. Interaction with redox regulatory protein APEX1 seems to activate CTAD and potentiates activation by NCOA1 and CREBBP. Involved in the axonal distribution and transport of mitochondria in neurons during hypoxia. This chain is Hypoxia-inducible factor 1-alpha (Hif1a), found in Rattus norvegicus (Rat).